A 120-amino-acid polypeptide reads, in one-letter code: Ribosome-binding factor A (120 aa).

Belongs to the RbfA family. As to quaternary structure, monomer. Binds 30S ribosomal subunits, but not 50S ribosomal subunits or 70S ribosomes.

The protein resides in the cytoplasm. Functionally, one of several proteins that assist in the late maturation steps of the functional core of the 30S ribosomal subunit. Associates with free 30S ribosomal subunits (but not with 30S subunits that are part of 70S ribosomes or polysomes). Required for efficient processing of 16S rRNA. May interact with the 5'-terminal helix region of 16S rRNA. The polypeptide is Ribosome-binding factor A (Clostridium botulinum (strain 657 / Type Ba4)).